A 504-amino-acid polypeptide reads, in one-letter code: Anthocyanidin 3-O-glucoside 5-O-glucosyltransferase (504 aa).

The active-site Proton acceptor is the His23. His23 provides a ligand contact to an anthocyanidin. A disordered region spans residues 107–126; the sequence is TKKGQGQGQGQGQGQGQGQG. The segment covering 111-125 has biased composition (gly residues); sequence QGQGQGQGQGQGQGQ. The UDP-alpha-D-glucose site is built by Thr157, Gln377, His392, Trp395, Asn396, Ser397, Glu400, Asp416, and Gln417.

It belongs to the UDP-glycosyltransferase family. As to expression, predominantly expressed in petals and weakly in filaments. Not expressed in leaves, stems and other floral organs.

The enzyme catalyses an anthocyanidin 3-O-beta-D-glucoside + UDP-alpha-D-glucose = an anthocyanidin 3,5-di-O-beta-D-glucoside + UDP + 2 H(+). Its pathway is pigment biosynthesis; anthocyanin biosynthesis. In terms of biological role, catalyzes the glucosylation at the O-5 position of anthocyanidin 3-glucosides to form anthocyanidin 3,5-di-O-glucosides using UDP-glucose as sugar donor. Anthocyanidin 3,5-di-O-glucosides are molecules that are responsible for pigmentation. Involved in biosynsthesis of accumulate gentiodelphin, a unique polyacylated delphinidin-type anthocyanin, in the petals. Also acts on anthocyanidin 3-O-(6-O-malonylglucoside). Much less active with hydroxycinnamoylglucose derivatives. No activity in the absence of the 3-O-glucoside group. The polypeptide is Anthocyanidin 3-O-glucoside 5-O-glucosyltransferase (5GT7) (Gentiana triflora (Clustered gentian)).